A 427-amino-acid polypeptide reads, in one-letter code: Mucorpepsin (427 aa).

A signal peptide spans 1–22 (MLFSKISSAILLTAASFALTSA). The propeptide at 23–66 (RPVSKQSDADDKLLALPLTSVNRKYSQTKHGQQAAEKLGGIKAF) is activation peptide. The Peptidase A1 domain occupies 86 to 418 (YAIPVSIGTP…DFGKNRIGFA (333 aa)). Asp-104 is a catalytic residue. The cysteines at positions 117 and 123 are disulfide-linked. Residue Asn-254 is glycosylated (N-linked (GlcNAc...) asparagine). The active site involves Asp-303. Cysteines 338 and 382 form a disulfide.

The protein belongs to the peptidase A1 family.

It carries out the reaction Hydrolysis of proteins, favoring hydrophobic residues at P1 and P1'. Clots milk. Does not accept Lys at P1, and hence does not activate trypsinogen.. This enzyme, capable of clotting milk is frequently used for cheese production. The protein is Mucorpepsin of Rhizomucor pusillus.